The following is a 228-amino-acid chain: GrpE protein homolog, mitochondrial (228 aa).

Over residues 46 to 57 the composition is skewed to basic and acidic residues; sequence DEAKSEESKENN. A disordered region spans residues 46–66; it reads DEAKSEESKENNEDLTEEQSE.

The protein belongs to the GrpE family. As to quaternary structure, component of the PAM complex, at least composed of SSC1 (mtHsp70), MGE1, TIM44, PAM16/TIM16, PAM17 and PAM18/TIM14. Interacts with SSQ1. The N-terminus is blocked.

Its subcellular location is the mitochondrion matrix. In terms of biological role, essential component of the PAM complex, a complex required for the translocation of transit peptide-containing proteins from the inner membrane into the mitochondrial matrix in an ATP-dependent manner. Seems to control the nucleotide-dependent binding of SSC1 to substrate proteins and the association of SSC1 with TIM44. This chain is GrpE protein homolog, mitochondrial (MGE1), found in Saccharomyces cerevisiae (strain ATCC 204508 / S288c) (Baker's yeast).